We begin with the raw amino-acid sequence, 316 residues long: Cysteine synthase (316 aa).

Residues asparagine 7 and arginine 35 each contribute to the hydrogen sulfide site. An N6-(pyridoxal phosphate)lysine modification is found at lysine 42. Residues asparagine 72 and 177–181 (GTGGS) each bind pyridoxal 5'-phosphate. Leucine 268 lines the hydrogen sulfide pocket. Serine 272 provides a ligand contact to pyridoxal 5'-phosphate.

Belongs to the cysteine synthase/cystathionine beta-synthase family. In terms of assembly, homodimer. Pyridoxal 5'-phosphate serves as cofactor.

It carries out the reaction O-acetyl-L-serine + hydrogen sulfide = L-cysteine + acetate. It participates in amino-acid biosynthesis; L-cysteine biosynthesis; L-cysteine from L-serine: step 2/2. The protein is Cysteine synthase (cysK) of Haemophilus influenzae (strain ATCC 51907 / DSM 11121 / KW20 / Rd).